The chain runs to 238 residues: ATP synthase subunit a (238 aa).

The next 5 membrane-spanning stretches (helical) occupy residues Ile15 to Ile35, Tyr76 to Met96, Pro111 to Ile131, Leu167 to Leu187, and Ala208 to Gly230.

The protein belongs to the ATPase A chain family. F-type ATPases have 2 components, CF(1) - the catalytic core - and CF(0) - the membrane proton channel. CF(1) has five subunits: alpha(3), beta(3), gamma(1), delta(1), epsilon(1). CF(0) has three main subunits: a(1), b(2) and c(9-12). The alpha and beta chains form an alternating ring which encloses part of the gamma chain. CF(1) is attached to CF(0) by a central stalk formed by the gamma and epsilon chains, while a peripheral stalk is formed by the delta and b chains.

It localises to the cell membrane. Key component of the proton channel; it plays a direct role in the translocation of protons across the membrane. This Streptococcus pneumoniae (strain 70585) protein is ATP synthase subunit a.